Reading from the N-terminus, the 330-residue chain is Tryptophan--tRNA ligase (330 aa).

ATP-binding positions include Gln-10–Thr-12 and Gly-18–Asn-19. The short motif at Ala-11–Asn-19 is the 'HIGH' region element. Asp-134 lines the L-tryptophan pocket. ATP-binding positions include Gly-146–Asp-148, Ile-186, and Lys-195–Ser-199. A 'KMSKS' region motif is present at residues Lys-195–Ser-199.

The protein belongs to the class-I aminoacyl-tRNA synthetase family. In terms of assembly, homodimer.

The protein resides in the cytoplasm. It catalyses the reaction tRNA(Trp) + L-tryptophan + ATP = L-tryptophyl-tRNA(Trp) + AMP + diphosphate + H(+). Its function is as follows. Catalyzes the attachment of tryptophan to tRNA(Trp). In Rickettsia felis (strain ATCC VR-1525 / URRWXCal2) (Rickettsia azadi), this protein is Tryptophan--tRNA ligase.